The chain runs to 337 residues: Anthranilate phosphoribosyltransferase (337 aa).

5-phospho-alpha-D-ribose 1-diphosphate contacts are provided by residues glycine 81, 84 to 85 (GD), serine 89, 91 to 94 (NVST), 109 to 117 (KHGNRAATS), and alanine 121. Glycine 81 serves as a coordination point for anthranilate. Serine 93 serves as a coordination point for Mg(2+). Position 112 (asparagine 112) interacts with anthranilate. An anthranilate-binding site is contributed by arginine 167. Residues aspartate 226 and glutamate 227 each contribute to the Mg(2+) site.

This sequence belongs to the anthranilate phosphoribosyltransferase family. In terms of assembly, homodimer. It depends on Mg(2+) as a cofactor.

The enzyme catalyses N-(5-phospho-beta-D-ribosyl)anthranilate + diphosphate = 5-phospho-alpha-D-ribose 1-diphosphate + anthranilate. It functions in the pathway amino-acid biosynthesis; L-tryptophan biosynthesis; L-tryptophan from chorismate: step 2/5. In terms of biological role, catalyzes the transfer of the phosphoribosyl group of 5-phosphorylribose-1-pyrophosphate (PRPP) to anthranilate to yield N-(5'-phosphoribosyl)-anthranilate (PRA). The chain is Anthranilate phosphoribosyltransferase from Methylorubrum populi (strain ATCC BAA-705 / NCIMB 13946 / BJ001) (Methylobacterium populi).